The sequence spans 126 residues: Glycine cleavage system H protein (126 aa).

The Lipoyl-binding domain occupies 24 to 105 (TLTVGITDHA…AYGVWLFKLK (82 aa)). Lys65 bears the N6-lipoyllysine mark.

This sequence belongs to the GcvH family. The glycine cleavage system is composed of four proteins: P, T, L and H. It depends on (R)-lipoate as a cofactor.

The glycine cleavage system catalyzes the degradation of glycine. The H protein shuttles the methylamine group of glycine from the P protein to the T protein. The protein is Glycine cleavage system H protein of Burkholderia vietnamiensis (strain G4 / LMG 22486) (Burkholderia cepacia (strain R1808)).